Consider the following 208-residue polypeptide: Inosine triphosphate pyrophosphatase (208 aa).

Ala2 carries the N-acetylalanine modification. Position 14–19 (14–19) interacts with ITP; it reads TGNAKK. Mg(2+) is bound at residue Glu44. Residues Lys56, 72–73, Lys89, 149–152, Lys172, and 177–178 each bind ITP; these read DT, FGWD, and HR.

Belongs to the HAM1 NTPase family. As to quaternary structure, homodimer. Mg(2+) serves as cofactor. Requires Mn(2+) as cofactor.

The protein resides in the cytoplasm. It catalyses the reaction ITP + H2O = IMP + diphosphate + H(+). The enzyme catalyses dITP + H2O = dIMP + diphosphate + H(+). The catalysed reaction is XTP + H2O = XMP + diphosphate + H(+). It carries out the reaction N(6)-hydroxy-dATP + H2O = N(6)-hydroxy-dAMP + diphosphate + H(+). Functionally, pyrophosphatase that hydrolyzes the non-canonical purine nucleotides inosine triphosphate (ITP), deoxyinosine triphosphate (dITP) as well as 2'-deoxy-N-6-hydroxylaminopurine triphosphate (dHAPTP) and xanthosine 5'-triphosphate (XTP) to their respective monophosphate derivatives. The enzyme does not distinguish between the deoxy- and ribose forms. Probably excludes non-canonical purines from RNA and DNA precursor pools, thus preventing their incorporation into RNA and DNA and avoiding chromosomal lesions. This is Inosine triphosphate pyrophosphatase from Bos taurus (Bovine).